We begin with the raw amino-acid sequence, 162 residues long: uncharacterized protein (162 aa).

In terms of domain architecture, PUA spans 78–154; the sequence is KNLVVVDIGA…KAIKNLHYVG (77 aa).

This is an uncharacterized protein from Methanocaldococcus jannaschii (strain ATCC 43067 / DSM 2661 / JAL-1 / JCM 10045 / NBRC 100440) (Methanococcus jannaschii).